Reading from the N-terminus, the 101-residue chain is Small ribosomal subunit protein uS14 (101 aa).

It belongs to the universal ribosomal protein uS14 family. Part of the 30S ribosomal subunit. Contacts proteins S3 and S10.

Functionally, binds 16S rRNA, required for the assembly of 30S particles and may also be responsible for determining the conformation of the 16S rRNA at the A site. The polypeptide is Small ribosomal subunit protein uS14 (Citrobacter koseri (strain ATCC BAA-895 / CDC 4225-83 / SGSC4696)).